The following is a 233-amino-acid chain: MTRLAILLSILAIGLILLIINHDTGRTMGLANDQFGQLVSLGAIATLIGAGILQSRHRFGEGLRQIAIWLFVVLALVSAYVYRFELEGFGNRLLAGLIPGRATIITDSEGQQEVVLQKMLNGHFETTATVDGKDISMLVDTGASNIALTYEDAEKIGLDPANLNFIVTVMTANGRAQAAPVMLQEISIGPITRRNIGATVAAKGKLDQSLLGMSFLSTLEMLQMRTDELRLRD.

The next 3 membrane-spanning stretches (helical) occupy residues 4 to 24 (LAILLSILAIGLILLIINHDT), 35 to 55 (FGQLVSLGAIATLIGAGILQS), and 66 to 86 (IAIWLFVVLALVSAYVYRFEL).

The protein resides in the cell membrane. This is an uncharacterized protein from Sinorhizobium sp.